The primary structure comprises 102 residues: Large ribosomal subunit protein uL24 (102 aa).

This sequence belongs to the universal ribosomal protein uL24 family. As to quaternary structure, part of the 50S ribosomal subunit.

One of two assembly initiator proteins, it binds directly to the 5'-end of the 23S rRNA, where it nucleates assembly of the 50S subunit. Functionally, one of the proteins that surrounds the polypeptide exit tunnel on the outside of the subunit. This is Large ribosomal subunit protein uL24 from Agrobacterium fabrum (strain C58 / ATCC 33970) (Agrobacterium tumefaciens (strain C58)).